The following is a 453-amino-acid chain: Ribosomal protein uS12 methylthiotransferase RimO (453 aa).

Residues P5–P120 form the MTTase N-terminal domain. [4Fe-4S] cluster-binding residues include C14, C50, C79, C151, C155, and C158. In terms of domain architecture, Radical SAM core spans L137–Q382. The TRAM domain occupies Q385–V453.

It belongs to the methylthiotransferase family. RimO subfamily. [4Fe-4S] cluster serves as cofactor.

It is found in the cytoplasm. It carries out the reaction L-aspartate(89)-[ribosomal protein uS12]-hydrogen + (sulfur carrier)-SH + AH2 + 2 S-adenosyl-L-methionine = 3-methylsulfanyl-L-aspartate(89)-[ribosomal protein uS12]-hydrogen + (sulfur carrier)-H + 5'-deoxyadenosine + L-methionine + A + S-adenosyl-L-homocysteine + 2 H(+). Catalyzes the methylthiolation of an aspartic acid residue of ribosomal protein uS12. The chain is Ribosomal protein uS12 methylthiotransferase RimO from Burkholderia ambifaria (strain ATCC BAA-244 / DSM 16087 / CCUG 44356 / LMG 19182 / AMMD) (Burkholderia cepacia (strain AMMD)).